Reading from the N-terminus, the 202-residue chain is uncharacterized protein (202 aa).

Residues Met1–Ala78 enclose the GST N-terminal domain. Glutathione is bound by residues Ser9, Val49, and Asp62–Ser63. In terms of domain architecture, GST C-terminal spans Asp83–Ala202.

The protein belongs to the GST superfamily. HSP26 family.

Glutathione (GSH) transferase homolog, that might be involved in selenium metabolism. This is an uncharacterized protein from Escherichia coli (strain K12).